Reading from the N-terminus, the 364-residue chain is Capsular polysaccharide phosphotransferase fcs1 (364 aa).

The protein belongs to the stealth family.

Part of a group II capsule biosynthesis locus. The chain is Capsular polysaccharide phosphotransferase fcs1 (fcs1) from Haemophilus influenzae.